The primary structure comprises 349 residues: Sesquiterpene synthase MAC_05714 (349 aa).

Mg(2+) is bound by residues Asp-91 and Asp-96. Positions 91–96 match the DDXXXD motif motif; it reads DDLFVD. Arg-184 contributes to the substrate binding site. 3 residues coordinate Mg(2+): Asn-230, Ser-234, and Glu-238.

It belongs to the terpene synthase family. Mg(2+) is required as a cofactor.

The catalysed reaction is (2E,6E)-farnesyl diphosphate + H2O = (+)-corvol ether B + diphosphate. The enzyme catalyses (2E,6E)-farnesyl diphosphate + H2O = (+)-corvol ether A + diphosphate. In terms of biological role, terpene synthase that catalyzes the conversion of (2E,6E)-farnesyl diphosphate (FPP) into sesquiterpenes which are important for fungi-environment interactions. Produces a mixture consisting of 8 sesquiterpenes including corvol ethers A and B, as well as traces of epizonarene, gamma-cadinene, delta-cadinene, alpha-cadinene, alpha-cadinol, and an unidentified sesquiterpene. Produces both corvol ether A and corvol ether B in similar concentrations. This chain is Sesquiterpene synthase MAC_05714, found in Metarhizium acridum (strain CQMa 102).